The sequence spans 437 residues: Chromosomal replication initiator protein DnaA (437 aa).

The segment at 1–74 is domain I, interacts with DnaA modulators; the sequence is MNLAWNKILE…EACGDKIPVE (74 aa). The tract at residues 74-98 is domain II; that stretch reads EILIETKATSPLQSFLEKSFDQKDF. The tract at residues 99 to 315 is domain III, AAA+ region; that stretch reads QFNPDYTFET…GALNDIYLYK (217 aa). Positions 142, 144, 145, and 146 each coordinate ATP. A domain IV, binds dsDNA region spans residues 316–437; that stretch reads KSYSLLFLNL…ERISSKYKLQ (122 aa).

The protein belongs to the DnaA family. In terms of assembly, oligomerizes as a right-handed, spiral filament on DNA at oriC.

It localises to the cytoplasm. Plays an essential role in the initiation and regulation of chromosomal replication. ATP-DnaA binds to the origin of replication (oriC) to initiate formation of the DNA replication initiation complex once per cell cycle. Binds the DnaA box (a 9 base pair repeat at the origin) and separates the double-stranded (ds)DNA. Forms a right-handed helical filament on oriC DNA; dsDNA binds to the exterior of the filament while single-stranded (ss)DNA is stabiized in the filament's interior. The ATP-DnaA-oriC complex binds and stabilizes one strand of the AT-rich DNA unwinding element (DUE), permitting loading of DNA polymerase. After initiation quickly degrades to an ADP-DnaA complex that is not apt for DNA replication. Binds acidic phospholipids. The protein is Chromosomal replication initiator protein DnaA of Leptospira borgpetersenii serovar Hardjo-bovis (strain JB197).